A 440-amino-acid polypeptide reads, in one-letter code: GTPase Obg (440 aa).

Residues S5 to L163 form the Obg domain. An OBG-type G domain is found at A164–S338. GTP is bound by residues G170–S177, F195–K199, D217–G220, S288–D291, and S319–V321. Residues S177 and T197 each contribute to the Mg(2+) site. Residues Y362–Q440 enclose the OCT domain.

Belongs to the TRAFAC class OBG-HflX-like GTPase superfamily. OBG GTPase family. In terms of assembly, monomer. Mg(2+) is required as a cofactor.

Its subcellular location is the cytoplasm. An essential GTPase which binds GTP, GDP and possibly (p)ppGpp with moderate affinity, with high nucleotide exchange rates and a fairly low GTP hydrolysis rate. Plays a role in control of the cell cycle, stress response, ribosome biogenesis and in those bacteria that undergo differentiation, in morphogenesis control. The protein is GTPase Obg of Lactobacillus delbrueckii subsp. bulgaricus (strain ATCC 11842 / DSM 20081 / BCRC 10696 / JCM 1002 / NBRC 13953 / NCIMB 11778 / NCTC 12712 / WDCM 00102 / Lb 14).